Reading from the N-terminus, the 191-residue chain is Fe/S biogenesis protein NfuA (191 aa).

[4Fe-4S] cluster contacts are provided by Cys149 and Cys152.

The protein belongs to the NfuA family. In terms of assembly, homodimer. It depends on [4Fe-4S] cluster as a cofactor.

In terms of biological role, involved in iron-sulfur cluster biogenesis. Binds a 4Fe-4S cluster, can transfer this cluster to apoproteins, and thereby intervenes in the maturation of Fe/S proteins. Could also act as a scaffold/chaperone for damaged Fe/S proteins. This chain is Fe/S biogenesis protein NfuA, found in Pectobacterium atrosepticum (strain SCRI 1043 / ATCC BAA-672) (Erwinia carotovora subsp. atroseptica).